Consider the following 264-residue polypeptide: Hydroxyethylthiazole kinase (264 aa).

Met-47 contributes to the substrate binding site. Residues Arg-123 and Ser-169 each coordinate ATP. Gly-196 provides a ligand contact to substrate.

This sequence belongs to the Thz kinase family. Requires Mg(2+) as cofactor.

It catalyses the reaction 5-(2-hydroxyethyl)-4-methylthiazole + ATP = 4-methyl-5-(2-phosphooxyethyl)-thiazole + ADP + H(+). The protein operates within cofactor biosynthesis; thiamine diphosphate biosynthesis; 4-methyl-5-(2-phosphoethyl)-thiazole from 5-(2-hydroxyethyl)-4-methylthiazole: step 1/1. In terms of biological role, catalyzes the phosphorylation of the hydroxyl group of 4-methyl-5-beta-hydroxyethylthiazole (THZ). The polypeptide is Hydroxyethylthiazole kinase (Brachyspira hyodysenteriae (strain ATCC 49526 / WA1)).